Reading from the N-terminus, the 645-residue chain is DNA ligase (645 aa).

NAD(+)-binding positions include 30–34 (DAEFD) and 72–73 (SQ). Lysine 99 functions as the N6-AMP-lysine intermediate in the catalytic mechanism. Arginine 120, glutamate 163, lysine 275, and lysine 296 together coordinate NAD(+). Zn(2+)-binding residues include cysteine 387, cysteine 390, cysteine 403, and cysteine 408. The 82-residue stretch at 564–645 (EEGAVLKGLS…EAFLNLIGKV (82 aa)) folds into the BRCT domain.

It belongs to the NAD-dependent DNA ligase family. LigA subfamily. The cofactor is Mg(2+). Mn(2+) is required as a cofactor.

It catalyses the reaction NAD(+) + (deoxyribonucleotide)n-3'-hydroxyl + 5'-phospho-(deoxyribonucleotide)m = (deoxyribonucleotide)n+m + AMP + beta-nicotinamide D-nucleotide.. In terms of biological role, DNA ligase that catalyzes the formation of phosphodiester linkages between 5'-phosphoryl and 3'-hydroxyl groups in double-stranded DNA using NAD as a coenzyme and as the energy source for the reaction. It is essential for DNA replication and repair of damaged DNA. This Treponema denticola (strain ATCC 35405 / DSM 14222 / CIP 103919 / JCM 8153 / KCTC 15104) protein is DNA ligase.